We begin with the raw amino-acid sequence, 224 residues long: Glutamate/aspartate import permease protein GltK (224 aa).

The Periplasmic segment spans residues 1-19 (MYEFDWSSIVPSLPYLLDG). The chain crosses the membrane as a helical span at residues 20 to 40 (LVITLKITVTAVVIGILWGTM). The 197-residue stretch at 20–216 (LVITLKITVT…VISLSASLLV (197 aa)) folds into the ABC transmembrane type-1 domain. Topologically, residues 41-67 (LAVMRLSSFAPVAWFAKAYVNVFRSIP) are cytoplasmic. The chain crosses the membrane as a helical span at residues 68-88 (LVMVLLWFYLIVPGFLQNVLG). The Periplasmic segment spans residues 89–94 (LSPKND). A helical membrane pass occupies residues 95–112 (IRLISAMVAFSMFEAAYY). At 113–154 (SEIIRAGIQSISRGQSSAALALGMTHWQSMKLIILPQAFRAM) the chain is on the cytoplasmic side. A helical transmembrane segment spans residues 155 to 175 (VPLLLTQGIVLFQDTSLVYVL). Residues 176–196 (SLADFFRTASTIGERDGTQVE) are Periplasmic-facing. The chain crosses the membrane as a helical span at residues 197–217 (MILFAGFVYFVISLSASLLVS). The Cytoplasmic portion of the chain corresponds to 218–224 (YLKRRTA).

Belongs to the binding-protein-dependent transport system permease family. HisMQ subfamily. The complex is composed of two ATP-binding proteins (GltL), two transmembrane proteins (GltJ and GltK) and a solute-binding protein (GltI).

The protein resides in the cell inner membrane. Functionally, part of the ABC transporter complex GltIJKL involved in glutamate and aspartate uptake. Probably responsible for the translocation of the substrate across the membrane. The sequence is that of Glutamate/aspartate import permease protein GltK (gltK) from Escherichia coli O157:H7.